A 577-amino-acid chain; its full sequence is Vacuolar protein sorting-associated protein 45 (577 aa).

It belongs to the STXBP/unc-18/SEC1 family. In terms of assembly, interacts with PEP7 and TLG2.

The protein resides in the cytoplasm. It localises to the vacuole membrane. In terms of biological role, essential for vacuolar protein sorting. Function in membrane traffic between the Golgi and the vacuole. This is Vacuolar protein sorting-associated protein 45 (VPS45) from Saccharomyces cerevisiae (strain ATCC 204508 / S288c) (Baker's yeast).